We begin with the raw amino-acid sequence, 116 residues long: Spexin (116 aa).

The signal sequence occupies residues 1–26 (MKGPSILAVAALALLLVLSVLENSSG). Residues 27–35 (APQRLSEKR) constitute a propeptide that is removed on maturation. Gln49 carries the post-translational modification Glutamine amide. 2 propeptides span residues 50–116 (GHRF…RFYW) and 74–116 (PNLQ…RFYW). The span at 56-73 (DQSRRKELADRPPPERRN) shows a compositional bias: basic and acidic residues. The interval 56–75 (DQSRRKELADRPPPERRNPN) is disordered.

This sequence belongs to the spexin family. In terms of tissue distribution, widely expressed; predominantly expressed in epithelial cells in the skin, respiratory, digestive, urinary and reproductive systems, retina, adrenal gland and various brain regions. In the adrenal gland, expressed in parenchymal cells of the cortex and in ganglionic cells and intermingled cortical cells of the medulla. Expressed in the type I glomic cells within the carotid body (at protein level). Widely expressed. Strongly expressed in esophagus, liver, pancreas, kidney, brain, hypothalamus, thyroid and ovary. Expressed in the zona glomerulosa (ZG) and zona fasciculata/reticularis (ZF/R) of the adrenal gland. Also expressed in stomach, lung, skeletal muscle, heart, uterus, spleen, adrenal gland and testis. Weakly expressed in small intestine, thymus, urinary bladder and adenohypophysis. In the brain, is expressed in the Barrington's nucleus, with lesser amount in the ventrolateral caudal periaqueductal gray (PAG) and in the mesopontine tegmentum.

The protein resides in the secreted. It localises to the extracellular space. It is found in the cytoplasmic vesicle. The protein localises to the secretory vesicle. Its function is as follows. Plays a role as a central modulator of cardiovascular and renal function and nociception. Also plays a role in energy metabolism and storage. Inhibits adrenocortical cell proliferation with minor stimulation on corticosteroid release. Acts as a ligand for galanin receptors GALR2 and GALR3. Intracerebroventricular administration of the peptide induces an increase in arterial blood pressure, a decrease in both heart rate and renal excretion and delayed natriuresis. Intraventricular administration of the peptide induces antinociceptive activity. Intraperitoneal administration of the peptide induces a reduction in food consumption and body weight. Inhibits long chain fatty acid uptake into adipocytes. Also induces contraction of muscarinic-like stomach smooth muscles. In terms of biological role, intracerebroventricular administration of the peptide induces a decrease in heart rate, but no change in arterial pressure, and an increase in urine flow rate. Intraventricular administration of the peptide induces antinociceptive activity. The chain is Spexin (SPX) from Rattus norvegicus (Rat).